A 271-amino-acid chain; its full sequence is Protein PXR1 (271 aa).

The 48-residue stretch at 25–72 (TSRFGHQFLEKFGWKPGMGLGLYPMNSNTSHIKVSIKDDNVGLGAKLK) folds into the G-patch domain. Residues 147 to 239 (SNAKKRKREG…SASNIPDAVN (93 aa)) form a disordered region. Acidic residues predominate over residues 157 to 168 (DDSEDEDDDDKE). The segment covering 175–203 (KKHKKHKKHKKDKKKDKKDKKEHKKHKKE) has biased composition (basic residues). Positions 204 to 221 (EKRLKKEKRAEKTKETKK) are enriched in basic and acidic residues. S230 is modified (phosphoserine).

This sequence belongs to the PINX1 family. In terms of assembly, interacts with EST2.

It localises to the nucleus. It is found in the nucleolus. Involved in rRNA-processing at A0, A1 and A2 sites through its action in U18 and U24 snoRNA 3'-end final trimming. Negative regulator of telomerase throughX competition for binding to EST2 with TLC1. The polypeptide is Protein PXR1 (PXR1) (Saccharomyces cerevisiae (strain YJM789) (Baker's yeast)).